Consider the following 302-residue polypeptide: NAD kinase 2 (302 aa).

Aspartate 79 (proton acceptor) is an active-site residue. NAD(+) is bound by residues 79-80, 153-154, aspartate 183, 194-199, alanine 218, and asparagine 252; these read DG, NE, and TAYSLS.

It belongs to the NAD kinase family. A divalent metal cation is required as a cofactor.

The protein resides in the cytoplasm. It catalyses the reaction NAD(+) + ATP = ADP + NADP(+) + H(+). Its function is as follows. Involved in the regulation of the intracellular balance of NAD and NADP, and is a key enzyme in the biosynthesis of NADP. Catalyzes specifically the phosphorylation on 2'-hydroxyl of the adenosine moiety of NAD to yield NADP. The polypeptide is NAD kinase 2 (Prochlorococcus marinus subsp. pastoris (strain CCMP1986 / NIES-2087 / MED4)).